The chain runs to 76 residues: Small ribosomal subunit protein bS18 (76 aa).

This sequence belongs to the bacterial ribosomal protein bS18 family. As to quaternary structure, part of the 30S ribosomal subunit. Forms a tight heterodimer with protein bS6.

Functionally, binds as a heterodimer with protein bS6 to the central domain of the 16S rRNA, where it helps stabilize the platform of the 30S subunit. The polypeptide is Small ribosomal subunit protein bS18 (Xylella fastidiosa (strain M23)).